Consider the following 170-residue polypeptide: Large ribosomal subunit protein uL10 (170 aa).

This sequence belongs to the universal ribosomal protein uL10 family. Part of the ribosomal stalk of the 50S ribosomal subunit. The N-terminus interacts with L11 and the large rRNA to form the base of the stalk. The C-terminus forms an elongated spine to which L12 dimers bind in a sequential fashion forming a multimeric L10(L12)X complex.

Its function is as follows. Forms part of the ribosomal stalk, playing a central role in the interaction of the ribosome with GTP-bound translation factors. The polypeptide is Large ribosomal subunit protein uL10 (Lactobacillus acidophilus (strain ATCC 700396 / NCK56 / N2 / NCFM)).